The primary structure comprises 537 residues: MFS-type transporter qa-x (537 aa).

Residues M1–A26 lie on the Cytoplasmic side of the membrane. A helical membrane pass occupies residues I27–A47. Residues L48–S74 lie on the Extracellular side of the membrane. The chain crosses the membrane as a helical span at residues V75–G95. The Cytoplasmic portion of the chain corresponds to R96–K98. A helical transmembrane segment spans residues S99–G119. Residues Q120 to R131 lie on the Extracellular side of the membrane. The helical transmembrane segment at V132 to L152 threads the bilayer. The Cytoplasmic portion of the chain corresponds to A153 to R160. Residues L161 to Y181 form a helical membrane-spanning segment. At G182 to L195 the chain is on the extracellular side. N184 carries an N-linked (GlcNAc...) asparagine glycan. A helical transmembrane segment spans residues I196–P216. Topologically, residues E217–R285 are cytoplasmic. A helical membrane pass occupies residues F286–Y306. The Extracellular portion of the chain corresponds to Y307–T327. A helical transmembrane segment spans residues G328–V349. Over G350–R352 the chain is Cytoplasmic. The helical transmembrane segment at R353–I373 threads the bilayer. The Extracellular portion of the chain corresponds to K374 to T389. A helical transmembrane segment spans residues S390 to W410. Residues N411–A435 are Cytoplasmic-facing. The helical transmembrane segment at A436–M456 threads the bilayer. Residues E457–Y458 lie on the Extracellular side of the membrane. A helical transmembrane segment spans residues G459–L479. Residues P480–V537 are Cytoplasmic-facing. The span at R514–T531 shows a compositional bias: basic and acidic residues. Residues R514–V537 form a disordered region.

Belongs to the major facilitator superfamily. Sugar transporter (TC 2.A.1.1) family.

Its subcellular location is the membrane. Functionally, MFS-type transporter; part of the qa gene cluster that mediates the catabolism of quinic acid (QA) and as such, allows the use of QA as a sole carbon source. Involved in the upatke of QA. The qa cluster encodes 3 inducible enymes (qa-2, qa-3 and qa-4) catalyzing the first three reactions in the catabolism of quinic acid to protocatechuic acid (also known as 3,4-Dihydroxybenzoic acid). The chain is MFS-type transporter qa-x from Neurospora crassa (strain ATCC 24698 / 74-OR23-1A / CBS 708.71 / DSM 1257 / FGSC 987).